A 221-amino-acid polypeptide reads, in one-letter code: Anti-sigma-W factor RsiW (221 aa).

At 1-87 (MKTCHSHDEL…AKWKLKAKRH (87 aa)) the chain is on the cytoplasmic side. Zn(2+) contacts are provided by histidine 30, cysteine 34, and cysteine 37. Residues 88-108 (PILVAAAIFLIMMSAAFFSAW) form a helical membrane-spanning segment. At 109-221 (SHTTDGIAVS…GEDDPHSTDN (113 aa)) the chain is on the extracellular side.

The protein belongs to the zinc-associated anti-sigma factor (ZAS) superfamily. Anti-sigma-W factor family. Zn(2+) serves as cofactor. Is processed by three successive proteolytic events. First, the extracellular region of RsiW is cleaved by PrsW (Site-1 cleavage) in response to cell envelope stresses. Next, it undergoes cleavage at an intramembrane site (Site-2 cleavage) mediated by RasP. This cleavage uncovers a cryptic proteolytic tag with conserved alanine residues in the transmembrane segment, that is recognized mainly by the ClpXP protease, which completely degrades the protein in the cytoplasm and leads to the induction of the sigma-W-controlled genes.

Its subcellular location is the membrane. Its function is as follows. Is the anti-sigma factor for SigW. The presence of RsiW leads to the inactivation of SigW, and its proteolytic destruction to sigma-W activation. This Shouchella clausii (strain KSM-K16) (Alkalihalobacillus clausii) protein is Anti-sigma-W factor RsiW (rsiW).